Here is a 364-residue protein sequence, read N- to C-terminus: Aminomethyltransferase (364 aa).

This sequence belongs to the GcvT family. As to quaternary structure, the glycine cleavage system is composed of four proteins: P, T, L and H.

It carries out the reaction N(6)-[(R)-S(8)-aminomethyldihydrolipoyl]-L-lysyl-[protein] + (6S)-5,6,7,8-tetrahydrofolate = N(6)-[(R)-dihydrolipoyl]-L-lysyl-[protein] + (6R)-5,10-methylene-5,6,7,8-tetrahydrofolate + NH4(+). The glycine cleavage system catalyzes the degradation of glycine. The polypeptide is Aminomethyltransferase (Salmonella enteritidis PT4 (strain P125109)).